Reading from the N-terminus, the 154-residue chain is Large ribosomal subunit protein uL13 (154 aa).

This sequence belongs to the universal ribosomal protein uL13 family. In terms of assembly, part of the 50S ribosomal subunit.

Functionally, this protein is one of the early assembly proteins of the 50S ribosomal subunit, although it is not seen to bind rRNA by itself. It is important during the early stages of 50S assembly. The polypeptide is Large ribosomal subunit protein uL13 (Brucella anthropi (strain ATCC 49188 / DSM 6882 / CCUG 24695 / JCM 21032 / LMG 3331 / NBRC 15819 / NCTC 12168 / Alc 37) (Ochrobactrum anthropi)).